Consider the following 451-residue polypeptide: AAA-ATPase At3g28570, mitochondrial (451 aa).

Residues 1–48 constitute a mitochondrion transit peptide; sequence MFAENLTRIGSNVAGLFFVWSTLKRYFPRQIQQLLFNAIQRIPIFKRL. Residue 243–250 coordinates ATP; sequence GPPGTGKS.

The protein belongs to the AAA ATPase family. BCS1 subfamily. Requires Mg(2+) as cofactor.

The protein localises to the mitochondrion. It carries out the reaction ATP + H2O = ADP + phosphate + H(+). This Arabidopsis thaliana (Mouse-ear cress) protein is AAA-ATPase At3g28570, mitochondrial.